We begin with the raw amino-acid sequence, 317 residues long: Transcriptional regulator LsrR (317 aa).

Positions 33–56 (QSEISDRLGLTRLKVSRLLEKGHQ) form a DNA-binding region, H-T-H motif.

Belongs to the SorC transcriptional regulatory family.

It localises to the cytoplasm. Its activity is regulated as follows. Inactivated by phosphorylated autoinducer-2 (phospho-AI-2). Phospho-AI-2 acts by binding to LsrR, which is then unable to bind to the promoter regions, allowing the transcription of the target genes. In terms of biological role, transcriptional regulator that represses the expression of the lsr operon in the absence of the quorum-sensing signaling molecule autoinducer 2 (AI-2). It also represses the expression of the lsrRK operon. Acts by binding directly to the lsrA and lsrR promoter regions. In the presence of phosphorylated autoinducer-2 (phospho-AI-2), LsrR is inactivated, leading to the transcription of the genes. The polypeptide is Transcriptional regulator LsrR (lsrR) (Escherichia coli O139:H28 (strain E24377A / ETEC)).